Here is a 139-residue protein sequence, read N- to C-terminus: Peptide methionine sulfoxide reductase MsrB (139 aa).

Positions Glu-17–Lys-139 constitute a MsrB domain. Zn(2+) is bound by residues Cys-56, Cys-59, Cys-105, and Cys-108. The active-site Nucleophile is the Cys-128.

This sequence belongs to the MsrB Met sulfoxide reductase family. Zn(2+) is required as a cofactor.

The catalysed reaction is L-methionyl-[protein] + [thioredoxin]-disulfide + H2O = L-methionyl-(R)-S-oxide-[protein] + [thioredoxin]-dithiol. The chain is Peptide methionine sulfoxide reductase MsrB from Bradyrhizobium diazoefficiens (strain JCM 10833 / BCRC 13528 / IAM 13628 / NBRC 14792 / USDA 110).